The following is a 399-amino-acid chain: Organelle RRM domain-containing protein 1, chloroplastic (399 aa).

The N-terminal 52 residues, 1-52 (MDAARASLLLAGGLAVSTSTSAVATAAQTVSIPHLSPHTRRRRQRRFLRLAS), are a transit peptide targeting the chloroplast. Positions 295-373 (KRLFVTGLSF…WMIVVDVAKH (79 aa)) constitute an RRM domain. The segment at 377–399 (DRQPPYSASGRSNQVLRSRYHTG) is disordered.

The protein localises to the plastid. It is found in the chloroplast. Involved in C-to-U editing of chloroplastic RNA. Functions as major chloroplastic editing factor. Controls a majority of the chloroplastic editing sites. The sequence is that of Organelle RRM domain-containing protein 1, chloroplastic from Oryza sativa subsp. japonica (Rice).